The chain runs to 464 residues: Glycosyl hydrolase family 109 protein 1 (464 aa).

The signal sequence occupies residues 1-16; that stretch reads MFKHLNALFIGLALFA. C17 carries the N-palmitoyl cysteine lipid modification. C17 carries S-diacylglycerol cysteine lipidation. Residues 63-64, D85, 134-137, 154-155, and N183 each bind NAD(+); these read MR, WKHH, and EV. Substrate-binding positions include Y212, R228, 240–243, and Y318; that span reads YATH. Y240 provides a ligand contact to NAD(+).

It belongs to the Gfo/Idh/MocA family. Glycosyl hydrolase 109 subfamily. Requires NAD(+) as cofactor.

The protein localises to the cell membrane. Its function is as follows. Glycosidase. Has no alpha-N-acetylgalactosaminidase activity. The protein is Glycosyl hydrolase family 109 protein 1 of Bacteroides fragilis (strain ATCC 25285 / DSM 2151 / CCUG 4856 / JCM 11019 / LMG 10263 / NCTC 9343 / Onslow / VPI 2553 / EN-2).